A 346-amino-acid chain; its full sequence is 2-oxoglutarate synthase subunit KorA (346 aa).

As to quaternary structure, heterotetramer of the KorA, KorB, KorC and KorD subunits.

The catalysed reaction is 2 oxidized [2Fe-2S]-[ferredoxin] + 2-oxoglutarate + CoA = succinyl-CoA + 2 reduced [2Fe-2S]-[ferredoxin] + CO2 + H(+). The polypeptide is 2-oxoglutarate synthase subunit KorA (korA) (Archaeoglobus fulgidus (strain ATCC 49558 / DSM 4304 / JCM 9628 / NBRC 100126 / VC-16)).